The sequence spans 134 residues: Interleukin-5 (134 aa).

Positions 1-19 (MRMLLHLSLLALGAAYVSA) are cleaved as a signal peptide. N-linked (GlcNAc...) asparagine glycosylation is found at N76 and N90.

Belongs to the IL-5 family. As to quaternary structure, homodimer; disulfide-linked. Interacts with IL5RA. Interacts with CSF2RB.

It is found in the secreted. Functionally, homodimeric cytokine expressed predominantly by T-lymphocytes and NK cells that plays an important role in the survival, differentiation, and chemotaxis of eosinophils. Also acts on activated and resting B-cells to induce immunoglobulin production, growth, and differentiation. Mechanistically, exerts its biological effects through a receptor composed of IL5RA subunit and the cytokine receptor common subunit beta/CSF2RB. Binding to the receptor leads to activation of various kinases including LYN, SYK and JAK2 and thereby propagates signals through the RAS-MAPK and JAK-STAT5 pathways respectively. This Felis catus (Cat) protein is Interleukin-5 (IL5).